Reading from the N-terminus, the 478-residue chain is 3-isopropylmalate dehydratase large subunit (478 aa).

Residues C347, C407, and C410 each contribute to the [4Fe-4S] cluster site.

The protein belongs to the aconitase/IPM isomerase family. LeuC type 1 subfamily. In terms of assembly, heterodimer of LeuC and LeuD. It depends on [4Fe-4S] cluster as a cofactor.

It catalyses the reaction (2R,3S)-3-isopropylmalate = (2S)-2-isopropylmalate. Its pathway is amino-acid biosynthesis; L-leucine biosynthesis; L-leucine from 3-methyl-2-oxobutanoate: step 2/4. In terms of biological role, catalyzes the isomerization between 2-isopropylmalate and 3-isopropylmalate, via the formation of 2-isopropylmaleate. This Prochlorococcus marinus (strain MIT 9313) protein is 3-isopropylmalate dehydratase large subunit.